A 354-amino-acid polypeptide reads, in one-letter code: Uroporphyrinogen decarboxylase (354 aa).

Residues 25 to 29 (RQAGR), D75, Y152, T207, and H330 each bind substrate.

It belongs to the uroporphyrinogen decarboxylase family. In terms of assembly, homodimer.

Its subcellular location is the cytoplasm. It carries out the reaction uroporphyrinogen III + 4 H(+) = coproporphyrinogen III + 4 CO2. The protein operates within porphyrin-containing compound metabolism; protoporphyrin-IX biosynthesis; coproporphyrinogen-III from 5-aminolevulinate: step 4/4. Its function is as follows. Catalyzes the decarboxylation of four acetate groups of uroporphyrinogen-III to yield coproporphyrinogen-III. The protein is Uroporphyrinogen decarboxylase of Xanthomonas euvesicatoria pv. vesicatoria (strain 85-10) (Xanthomonas campestris pv. vesicatoria).